Here is a 447-residue protein sequence, read N- to C-terminus: NAC domain containing protein 50 (447 aa).

The interval 1-21 (MGRESLAVVSSPPSATAPSTA) is disordered. The region spanning 27 to 178 (LAPGFRFHPT…AYVLCRVFHK (152 aa)) is the NAC domain. The DNA-binding element occupies 126–184 (LGMKKTLVFHSGRAPDGLRTNWVMHEYRLVEYETETNGSLLQDAYVLCRVFHKNNIGPP). Disordered regions lie at residues 246–303 (DATP…NKEA) and 371–392 (KENQ…EEKV). Residues 281 to 293 (TLKREHAEEDERP) are compositionally biased toward basic and acidic residues. Positions 392–447 (VNDLQKEVHQMSVERETFKLEMMSAEAMISILQSRIDALRQENEELKKKNASGQAS) form a coiled coil.

As to quaternary structure, interacts with JMJ14 and NAC052. In terms of tissue distribution, mostly expressed in floral organs, and, at low levels, in other organs.

It is found in the nucleus. Its function is as follows. Transcriptional repressor that binds to the motif 5'-(C/T)A(C/A)G-3' in the promoter of target genes. Also binds to the 5'-CTTGNNNNNCAAG-3' consensus sequence in chromatin. Can bind to the mitochondrial dysfunction motif (MDM) present in the upstream regions of mitochondrial dysfunction stimulon (MDS) genes involved in mitochondrial retrograde regulation (MRR). Together with NAC051/NAC052 and JMJ14, regulates gene expression and flowering time by associating with the histone demethylase JMJ14, probably by the promotion of RNA-mediated gene silencing. This chain is NAC domain containing protein 50, found in Arabidopsis thaliana (Mouse-ear cress).